The chain runs to 231 residues: NADH-ubiquinone oxidoreductase chain 4 (231 aa).

A run of 7 helical transmembrane segments spans residues 1 to 21 (PIAGSMVLAAILLKLGGYGII), 34 to 54 (MFLPFIVLALWGAILANLTCL), 63 to 85 (IAYSSVSHMGLVAAAIIIQTPWG), 89 to 111 (AMALMIAHGFTSSALFCLANTTY), 128 to 148 (ILPMTSTWWLLANLMNIATPP), 169 to 189 (TIILLGLSMLITASYSLHMFL), and 211 to 231 (LLMTLHLIPLMMISMKPELVI).

This sequence belongs to the complex I subunit 4 family.

The protein localises to the mitochondrion membrane. It catalyses the reaction a ubiquinone + NADH + 5 H(+)(in) = a ubiquinol + NAD(+) + 4 H(+)(out). Functionally, core subunit of the mitochondrial membrane respiratory chain NADH dehydrogenase (Complex I) that is believed to belong to the minimal assembly required for catalysis. Complex I functions in the transfer of electrons from NADH to the respiratory chain. The immediate electron acceptor for the enzyme is believed to be ubiquinone. The sequence is that of NADH-ubiquinone oxidoreductase chain 4 (MT-ND4) from Porthidium ophryomegas (Slender hognose viper).